The following is a 355-amino-acid chain: Elongation factor Ts (355 aa).

Residues 82–85 (TDFV) are involved in Mg(2+) ion dislocation from EF-Tu.

It belongs to the EF-Ts family.

The protein localises to the cytoplasm. Functionally, associates with the EF-Tu.GDP complex and induces the exchange of GDP to GTP. It remains bound to the aminoacyl-tRNA.EF-Tu.GTP complex up to the GTP hydrolysis stage on the ribosome. The sequence is that of Elongation factor Ts from Wolinella succinogenes (strain ATCC 29543 / DSM 1740 / CCUG 13145 / JCM 31913 / LMG 7466 / NCTC 11488 / FDC 602W) (Vibrio succinogenes).